The sequence spans 456 residues: Bifunctional protein GlmU (456 aa).

A pyrophosphorylase region spans residues 1–229 (MLNSAMSVVI…ISETDGVNNR (229 aa)). Residues 11 to 14 (LAAG), lysine 25, glutamine 76, 81 to 82 (GT), 103 to 105 (YGD), glycine 140, glutamate 154, asparagine 169, and asparagine 227 contribute to the UDP-N-acetyl-alpha-D-glucosamine site. Aspartate 105 serves as a coordination point for Mg(2+). Asparagine 227 lines the Mg(2+) pocket. The segment at 230-250 (LQLSRLERIYQAEQAEKLLLS) is linker. The tract at residues 251–456 (GVMLRDPARF…QGWQRPVKKK (206 aa)) is N-acetyltransferase. The UDP-N-acetyl-alpha-D-glucosamine site is built by arginine 333 and lysine 351. Histidine 363 (proton acceptor) is an active-site residue. Positions 366 and 377 each coordinate UDP-N-acetyl-alpha-D-glucosamine. Residues alanine 380, 386-387 (NY), serine 405, alanine 423, and arginine 440 contribute to the acetyl-CoA site.

It in the N-terminal section; belongs to the N-acetylglucosamine-1-phosphate uridyltransferase family. In the C-terminal section; belongs to the transferase hexapeptide repeat family. As to quaternary structure, homotrimer. Mg(2+) serves as cofactor.

It is found in the cytoplasm. It catalyses the reaction alpha-D-glucosamine 1-phosphate + acetyl-CoA = N-acetyl-alpha-D-glucosamine 1-phosphate + CoA + H(+). The enzyme catalyses N-acetyl-alpha-D-glucosamine 1-phosphate + UTP + H(+) = UDP-N-acetyl-alpha-D-glucosamine + diphosphate. Its pathway is nucleotide-sugar biosynthesis; UDP-N-acetyl-alpha-D-glucosamine biosynthesis; N-acetyl-alpha-D-glucosamine 1-phosphate from alpha-D-glucosamine 6-phosphate (route II): step 2/2. It participates in nucleotide-sugar biosynthesis; UDP-N-acetyl-alpha-D-glucosamine biosynthesis; UDP-N-acetyl-alpha-D-glucosamine from N-acetyl-alpha-D-glucosamine 1-phosphate: step 1/1. The protein operates within bacterial outer membrane biogenesis; LPS lipid A biosynthesis. Its function is as follows. Catalyzes the last two sequential reactions in the de novo biosynthetic pathway for UDP-N-acetylglucosamine (UDP-GlcNAc). The C-terminal domain catalyzes the transfer of acetyl group from acetyl coenzyme A to glucosamine-1-phosphate (GlcN-1-P) to produce N-acetylglucosamine-1-phosphate (GlcNAc-1-P), which is converted into UDP-GlcNAc by the transfer of uridine 5-monophosphate (from uridine 5-triphosphate), a reaction catalyzed by the N-terminal domain. The protein is Bifunctional protein GlmU of Salmonella choleraesuis (strain SC-B67).